Here is a 158-residue protein sequence, read N- to C-terminus: Sporulation-delaying protein SdpA (158 aa).

It is found in the cytoplasm. Its function is as follows. Required for the maturation of SdpC to SDP. Not required for SdpC signal peptide cleavage, secretion from the cell or disulfide bond formation. The sequence is that of Sporulation-delaying protein SdpA from Bacillus subtilis (strain 168).